Consider the following 1124-residue polypeptide: tRNA (34-2'-O)-methyltransferase regulator WDR6 (1124 aa).

M1 carries the N-acetylmethionine modification. WD repeat units follow at residues 53–97 (MKRV…IVKI), 105–143 (RELW…LYDP), 147–189 (CSLQ…VWYP), 200–238 (VPDR…IWKV), 247–285 (RVQN…VWSH), 289–327 (ILQA…LWHL), 335–376 (SGVF…LYDL), 381–422 (WEQL…VVPI), 425–470 (PTAA…ISAA), 476–520 (IFVK…LYPS), 557–596 (PMST…FVRG), 602–640 (VLRQ…VWSP), 643–682 (HEKL…LYRA), 743–789 (LIDI…VWGV), 852–897 (RHRH…LFLL), 905–950 (QLLA…FWDL), 974–1015 (GSPC…VFVL), 1039–1076 (EEYS…FWRL), and 1082–1124 (TFMN…NWYD).

Belongs to the WD repeat WDR6 family. In terms of assembly, interacts with FTSJ1; the interaction is direct, and required for 2'-O-methylation of position 34 in substrate tRNAs. Interacts with IRS4. Interacts with STK11/LKB1.

The protein resides in the cytoplasm. Functionally, together with methyltransferase FTSJ1, methylates the 2'-O-ribose of nucleotides at position 34 of the tRNA anticodon loop of substrate tRNAs. Required for the correct positioning of the substrate tRNA for methylation. Required to suppress amino acid starvation-induced autophagy. Enhances the STK11/LKB1-induced cell growth suppression activity. The polypeptide is tRNA (34-2'-O)-methyltransferase regulator WDR6 (WDR6) (Bos taurus (Bovine)).